We begin with the raw amino-acid sequence, 326 residues long: Phenylserine dehydratase (326 aa).

In terms of assembly, monomer. Pyridoxal 5'-phosphate serves as cofactor.

It catalyses the reaction L-threo-3-phenylserine = 3-phenylpyruvate + NH4(+). Inhibited by phenylhydrazine, hydroxylamine, p-chloromercuribenzoate, and HgCl(2). The sequence is that of Phenylserine dehydratase from Ralstonia pickettii (Burkholderia pickettii).